A 111-amino-acid polypeptide reads, in one-letter code: Cytochrome bo(3) ubiquinol oxidase subunit 4 (111 aa).

The Cytoplasmic portion of the chain corresponds to 1–17; the sequence is MSSAAHDNHGAGHGSLG. The helical transmembrane segment at 18 to 38 threads the bilayer; it reads SYAIGFVLSVILTAIPFYMVM. The Periplasmic portion of the chain corresponds to 39–46; sequence DGGFSRHA. A helical membrane pass occupies residues 47–67; it reads TILTMVVLGLVQVVVHLICFL. Residues 68 to 80 are Cytoplasmic-facing; the sequence is HMNMSSEGRWNVM. A helical transmembrane segment spans residues 81-101; sequence AFIFTVIVILLVVGLSLWIIF. Topologically, residues 102–111 are periplasmic; it reads SADMLMMPMP.

Belongs to the cytochrome c oxidase bacterial subunit 4 family. As to quaternary structure, heterooctamer of two A chains, two B chains, two C chains and two D chains.

It localises to the cell inner membrane. Functionally, cytochrome bo(3) ubiquinol terminal oxidase is the component of the aerobic respiratory chain of E.coli that predominates when cells are grown at high aeration. Has proton pump activity across the membrane in addition to electron transfer, pumping 2 protons/electron. This is Cytochrome bo(3) ubiquinol oxidase subunit 4 (cyoD) from Pseudomonas aeruginosa (strain ATCC 15692 / DSM 22644 / CIP 104116 / JCM 14847 / LMG 12228 / 1C / PRS 101 / PAO1).